A 140-amino-acid chain; its full sequence is Large ribosomal subunit protein uL11 (140 aa).

The protein belongs to the universal ribosomal protein uL11 family. In terms of assembly, part of the ribosomal stalk of the 50S ribosomal subunit. Interacts with L10 and the large rRNA to form the base of the stalk. L10 forms an elongated spine to which L12 dimers bind in a sequential fashion forming a multimeric L10(L12)X complex. One or more lysine residues are methylated.

Functionally, forms part of the ribosomal stalk which helps the ribosome interact with GTP-bound translation factors. The sequence is that of Large ribosomal subunit protein uL11 from Dehalococcoides mccartyi (strain CBDB1).